The chain runs to 477 residues: Zinc metalloproteinase/disintegrin (477 aa).

An N-terminal signal peptide occupies residues 1–20 (MIEVLLVTICLAAFPYQGSS). Residues 21–187 (IILESGNVND…PIKKASQSNL (167 aa)) constitute a propeptide that is removed on maturation. The Peptidase M12B domain occupies 193–389 (RYIELFLVVD…DNPQCILNKQ (197 aa)). Glu196 and Asp280 together coordinate Ca(2+). 3 cysteine pairs are disulfide-bonded: Cys304–Cys384, Cys344–Cys368, and Cys346–Cys351. His329 serves as a coordination point for Zn(2+). The active site involves Glu330. Positions 333 and 339 each coordinate Zn(2+). Residues Cys384 and Asn387 each coordinate Ca(2+). Positions 390 to 404 (LRTDTVSTPVSGKNF) are excised as a propeptide. The Disintegrin domain occupies 396–477 (STPVSGKNFG…AGCPRNPFHA (82 aa)). Cystine bridges form between Cys410-Cys425, Cys412-Cys420, Cys419-Cys442, Cys433-Cys439, Cys438-Cys463, and Cys451-Cys470. The Cell attachment site motif lies at 455-457 (RGD).

It belongs to the venom metalloproteinase (M12B) family. P-II subfamily. P-IIa sub-subfamily. As to quaternary structure, monomer. Zn(2+) serves as cofactor. As to expression, expressed by the venom gland.

The protein localises to the secreted. Inhibited by 1,10-phenanthroline and EDTA. Functionally, impairs hemostasis in the envenomed animal. Does not exhibit detectable plasminogen activating activity. Has hemagglutinating activity on red blood cells. Cleaves insulin B chain at '38-Ala-|-Leu-39' and '40-Tyr-|-Leu-41' bonds. This recombinant protein shows high inhibitory activity on collagen-induced platelet aggregation. This chain is Zinc metalloproteinase/disintegrin, found in Bothrops jararaca (Jararaca).